We begin with the raw amino-acid sequence, 338 residues long: Bacteriochlorophyllide d C-20 methyltransferase (338 aa).

Glutamate 147 contributes to the S-adenosyl-L-methionine binding site. Histidine 150 lines the substrate pocket. Residues glycine 177, asparagine 200, 227–228 (DI), and 242–243 (CR) each bind S-adenosyl-L-methionine. Tyrosine 246 serves as the catalytic Nucleophile. Histidine 290 contacts a bacteriochlorophyll d.

This sequence belongs to the class I-like SAM-binding methyltransferase superfamily. Cation-independent O-methyltransferase family. As to quaternary structure, homodimer.

The catalysed reaction is a bacteriochlorophyllide d + S-adenosyl-L-methionine = a bacteriochlorophyllide c + S-adenosyl-L-homocysteine + H(+). It functions in the pathway porphyrin-containing compound metabolism; bacteriochlorophyll biosynthesis (light-independent). Its function is as follows. Involved in the biosynthesis of the major light-harvesting pigment bacteriochlorophyll c (BChlc), which confers a significant competitive advantage to green sulfur bacteria living at limiting red and near-infrared light intensities. Catalyzes the methylation at the C-20 position of the cyclic tetrapyrrole chlorin of bacteriochlorophyll d (BChld) to produce bacteriochlorophyll c (BChlc) using S-adenosylmethionine (SAM) as a methyl source. The chain is Bacteriochlorophyllide d C-20 methyltransferase from Chlorobaculum tepidum (strain ATCC 49652 / DSM 12025 / NBRC 103806 / TLS) (Chlorobium tepidum).